We begin with the raw amino-acid sequence, 391 residues long: Ferrochelatase (391 aa).

The Fe cation site is built by H196 and E281.

It belongs to the ferrochelatase family.

Its subcellular location is the cytoplasm. It carries out the reaction heme b + 2 H(+) = protoporphyrin IX + Fe(2+). Its pathway is porphyrin-containing compound metabolism; protoheme biosynthesis; protoheme from protoporphyrin-IX: step 1/1. In terms of biological role, catalyzes the ferrous insertion into protoporphyrin IX. This chain is Ferrochelatase, found in Prochlorococcus marinus (strain MIT 9312).